The sequence spans 619 residues: Chaperone protein HscA homolog (619 aa).

This sequence belongs to the heat shock protein 70 family.

In terms of biological role, chaperone involved in the maturation of iron-sulfur cluster-containing proteins. Has a low intrinsic ATPase activity which is markedly stimulated by HscB. The protein is Chaperone protein HscA homolog of Haemophilus influenzae (strain 86-028NP).